We begin with the raw amino-acid sequence, 317 residues long: MRAAAAGGGVRTAALALLLGALHWAPARCEEYDYYGWQAEPLHGRSYSKPPQCLDIPADLPLCHTVGYKRMRLPNLLEHESLAEVKQQASSWLPLLAKRCHSDTQVFLCSLFAPVCLDRPIYPCRSLCEAVRAGCAPLMEAYGFPWPEMLHCHKFPLDNDLCIAVQFGHLPATAPPVTKICAQCEMEHSADGLMEQMCSSDFVVKMRIKEIKIENGDRKLIGAQKKKKLLKPGPLKRKDTKRLVLHMKNGAGCPCPQLDSLAGSFLVMGRKVDGQLLLMAVYRWDKKNKEMKFAVKFMFSYPCSLYYPFFYGAAEPH.

The first 29 residues, 1 to 29, serve as a signal peptide directing secretion; it reads MRAAAAGGGVRTAALALLLGALHWAPARC. The 118-residue stretch at 48–165 folds into the FZ domain; it reads SKPPQCLDIP…PLDNDLCIAV (118 aa). Disulfide bonds link cysteine 53/cysteine 116, cysteine 63/cysteine 109, cysteine 100/cysteine 135, cysteine 124/cysteine 162, cysteine 128/cysteine 152, cysteine 181/cysteine 253, cysteine 184/cysteine 255, and cysteine 198/cysteine 303. Residues 181 to 303 form the NTR domain; sequence CAQCEMEHSA…AVKFMFSYPC (123 aa).

This sequence belongs to the secreted frizzled-related protein (sFRP) family. As to expression, highly expressed in the retinal pigment epithelium (RPE) and pancreas. Weak expression in heart, liver and muscle.

The protein localises to the secreted. In terms of biological role, soluble frizzled-related proteins (sFRPS) function as modulators of Wnt signaling through direct interaction with Wnts. They have a role in regulating cell growth and differentiation in specific cell types. SFRP5 may be involved in determining the polarity of photoreceptor, and perhaps, other cells in the retina. The protein is Secreted frizzled-related protein 5 (SFRP5) of Homo sapiens (Human).